A 339-amino-acid polypeptide reads, in one-letter code: Anthranilate phosphoribosyltransferase (339 aa).

Residues glycine 79, 82-83 (GD), serine 87, 89-92 (NIST), 107-115 (KHGNRSISS), and serine 119 contribute to the 5-phospho-alpha-D-ribose 1-diphosphate site. Glycine 79 serves as a coordination point for anthranilate. Serine 91 is a binding site for Mg(2+). Asparagine 110 lines the anthranilate pocket. Residue arginine 165 participates in anthranilate binding. Mg(2+) contacts are provided by aspartate 224 and glutamate 225.

Belongs to the anthranilate phosphoribosyltransferase family. In terms of assembly, homodimer. It depends on Mg(2+) as a cofactor.

The catalysed reaction is N-(5-phospho-beta-D-ribosyl)anthranilate + diphosphate = 5-phospho-alpha-D-ribose 1-diphosphate + anthranilate. It participates in amino-acid biosynthesis; L-tryptophan biosynthesis; L-tryptophan from chorismate: step 2/5. Functionally, catalyzes the transfer of the phosphoribosyl group of 5-phosphorylribose-1-pyrophosphate (PRPP) to anthranilate to yield N-(5'-phosphoribosyl)-anthranilate (PRA). The sequence is that of Anthranilate phosphoribosyltransferase from Listeria monocytogenes serotype 4b (strain CLIP80459).